The chain runs to 839 residues: Autophagy-related protein 9A (839 aa).

Position 2 is an N-acetylalanine (A2). At A2–C61 the chain is on the cytoplasmic side. A Tyrosine-based sorting signal motif is present at residues Y8–L11. Phosphoserine is present on residues S14, S16, and S18. Residues M62–V84 traverse the membrane as a helical segment. The Lumenal portion of the chain corresponds to S85–E128. N-linked (GlcNAc...) asparagine glycosylation is present at N99. Residues N129–I154 traverse the membrane as a helical segment. Over C155–I290 the chain is Cytoplasmic. The stretch at L291–C301 is an intramembrane region. The Cytoplasmic segment spans residues P302–V319. The stretch at L320 to G328 is an intramembrane region. At A329–P371 the chain is on the cytoplasmic side. A helical transmembrane segment spans residues L372–Y397. At D398–H406 the chain is on the lumenal side. A helical transmembrane segment spans residues V407–F424. The Cytoplasmic portion of the chain corresponds to I425 to Q470. Residues Y471–L480 lie within the membrane without spanning it. The Cytoplasmic portion of the chain corresponds to L481–P483. Residues I484–F492 lie within the membrane without spanning it. Residues C493–V839 lie on the Cytoplasmic side of the membrane. S656, S735, S738, S741, and S828 each carry phosphoserine. 2 disordered regions span residues S656–W689 and H717–V839. Positions E724–D736 are enriched in basic and acidic residues. Composition is skewed to acidic residues over residues E737–G747 and V823–L832.

The protein belongs to the ATG9 family. In terms of assembly, homotrimer; forms a homotrimer with a central pore that forms a path between the two membrane leaflets. Interacts (via cytoplasmic its C-terminus) with ATG2A. Interacts with SUPT20H. Interacts (via the tyrosine-based sorting signal motif) with AP4M1; promoting association with the AP-4 complex. Interacts with ARFIP1 and ARFIP2. Interacts with PI4K2A and PI4KB. Interacts with ATG4A; the interaction is direct and promotes ATG9A trafficking. Ufmylated in a DDRGK1 dependent manner.

The protein resides in the preautophagosomal structure membrane. It localises to the cytoplasmic vesicle. Its subcellular location is the autophagosome membrane. It is found in the golgi apparatus. The protein localises to the trans-Golgi network membrane. The protein resides in the late endosome membrane. It localises to the recycling endosome membrane. Its subcellular location is the endoplasmic reticulum membrane. It is found in the mitochondrion membrane. The enzyme catalyses a 1,2-diacyl-sn-glycero-3-phosphocholine(in) = a 1,2-diacyl-sn-glycero-3-phosphocholine(out). It carries out the reaction a 1,2-diacyl-sn-glycero-3-phospho-L-serine(in) = a 1,2-diacyl-sn-glycero-3-phospho-L-serine(out). It catalyses the reaction a 1,2-diacyl-sn-glycero-3-phosphoethanolamine(in) = a 1,2-diacyl-sn-glycero-3-phosphoethanolamine(out). In terms of biological role, phospholipid scramblase involved in autophagy by mediating autophagosomal membrane expansion. Cycles between the preautophagosomal structure/phagophore assembly site (PAS) and the cytoplasmic vesicle pool and supplies membrane for the growing autophagosome. Lipid scramblase activity plays a key role in preautophagosomal structure/phagophore assembly by distributing the phospholipids that arrive through ATG2 (ATG2A or ATG2B) from the cytoplasmic to the luminal leaflet of the bilayer, thereby driving autophagosomal membrane expansion. Also required to supply phosphatidylinositol 4-phosphate to the autophagosome initiation site by recruiting the phosphatidylinositol 4-kinase beta (PI4KB) in a process dependent on ARFIP2, but not ARFIP1. In addition to autophagy, also plays a role in necrotic cell death. The sequence is that of Autophagy-related protein 9A from Rattus norvegicus (Rat).